Consider the following 568-residue polypeptide: Sulfite reductase [NADPH] hemoprotein beta-component (568 aa).

Residues C426, C432, C471, and C475 each coordinate [4Fe-4S] cluster. Residue C475 participates in siroheme binding.

The protein belongs to the nitrite and sulfite reductase 4Fe-4S domain family. In terms of assembly, alpha(8)-beta(8). The alpha component is a flavoprotein, the beta component is a hemoprotein. Siroheme is required as a cofactor. [4Fe-4S] cluster serves as cofactor.

The catalysed reaction is hydrogen sulfide + 3 NADP(+) + 3 H2O = sulfite + 3 NADPH + 4 H(+). It participates in sulfur metabolism; hydrogen sulfide biosynthesis; hydrogen sulfide from sulfite (NADPH route): step 1/1. Component of the sulfite reductase complex that catalyzes the 6-electron reduction of sulfite to sulfide. This is one of several activities required for the biosynthesis of L-cysteine from sulfate. The sequence is that of Sulfite reductase [NADPH] hemoprotein beta-component from Xylella fastidiosa (strain M23).